Here is a 335-residue protein sequence, read N- to C-terminus: uncharacterized protein (335 aa).

Position 28–35 (28–35 (GPINSGKT)) interacts with ATP.

The protein belongs to the archaeal ATPase family.

This is an uncharacterized protein from Pyrococcus abyssi (strain GE5 / Orsay).